Here is a 471-residue protein sequence, read N- to C-terminus: Ubiquitin carboxyl-terminal hydrolase 8 (471 aa).

Positions 4, 6, 46, 49, 60, 63, 68, 73, 77, 83, 96, and 99 each coordinate Zn(2+). The UBP-type; degenerate zinc-finger motif lies at 22 to 122; it reads KTCNAARYIL…ILAKYWDDVC (101 aa). In terms of domain architecture, USP spans 137 to 468; that stretch reads SGLINMGSTC…QAYLLFYTIR (332 aa). The active-site Nucleophile is C146. Positions 170, 174, 182, 185, 250, 271, 273, 276, 289, 292, 336, and 339 each coordinate Zn(2+). Catalysis depends on H427, which acts as the Proton acceptor.

This sequence belongs to the peptidase C19 family. UBP8 subfamily. Component of the 1.8 MDa SAGA (Spt-Ada-Gcn5 acetyltransferase) complex, which is composed of 19 subunits TRA1, SPT7, TAF5, NGG1/ADA3, SGF73, SPT20/ADA5, SPT8, TAF12, TAF6, HFI1/ADA1, UBP8, GCN5, ADA2, SPT3, SGF29, TAF10, TAF9, SGF11 and SUS1. The SAGA complex is composed of 4 modules, namely the HAT (histone acetyltransferase) module (GCN5, ADA2, NGG1/ADA3 and SGF29), the DUB (deubiquitinating) module (UBP8, SGF11, SGF73 and SUS1), the core or TAF (TBP-associated factor) module (TAF5, TAF6, TAF9, TAF10 and TAF12), and the Tra1 or SPT (Suppressor of Ty) module (TRA1, HFI1/ADA1, SPT3, SPT7, SPT8 and SPT20/ADA5). The Tra1/SPT module binds activators, the core module recruits TBP (TATA-binding protein), the HAT module contains the histone H3 acetyltransferase GCN5, and the DUB module comprises the histone H2B deubiquitinase UBP8. Also identified in an altered form of SAGA, named SALSA (SAGA altered, Spt8 absent) or SLIK (SAGA-like) complex, which contains a C-terminal truncated form of SPT7 and is missing SPT8. However, it has been shown that the SAGA and SAGA-like SALSA/SLIK transcriptional coactivators are structurally and biochemically equivalent.

It localises to the nucleus. The catalysed reaction is Thiol-dependent hydrolysis of ester, thioester, amide, peptide and isopeptide bonds formed by the C-terminal Gly of ubiquitin (a 76-residue protein attached to proteins as an intracellular targeting signal).. In terms of biological role, histone deubiquitinating enzyme component of the transcription coactivator SAGA complex. SAGA acts as a general cofactor required for essentially all RNA polymerase II transcription. At the promoters, SAGA is required for transcription pre-initiation complex (PIC) recruitment. It influences RNA polymerase II transcriptional activity through different activities such as TBP interaction (via core/TAF module) and promoter selectivity, interaction with transcription activators (via Tra1/SPT module), and chromatin modification through histone acetylation (via HAT module) and deubiquitination (via DUB module). SAGA preferentially acetylates histones H3 (to form H3K9ac, H3K14ac, H3K18ac and H3K23ac) and H2B and deubiquitinates histone H2B. SAGA interacts with DNA via upstream activating sequences (UASs). Also identified in a modified version of SAGA named SALSA or SLIK. The cleavage of SPT7 and the absence of the SPT8 subunit in SLIK neither drive any major conformational differences in its structure compared with SAGA, nor significantly affect HAT, DUB, or DNA-binding activities. Within the DUB module, the correctly positioned zinc finger domains of SGF11 and SGF73 are both required to fully activate the ubiquitin hydrolase UBP8. The DUB module is also linked to the splicing efficiency of many transcripts. The chain is Ubiquitin carboxyl-terminal hydrolase 8 (UBP8) from Saccharomyces cerevisiae (strain ATCC 204508 / S288c) (Baker's yeast).